The following is a 202-amino-acid chain: CASP-like protein 1E1 (202 aa).

Residues 1–33 are Cytoplasmic-facing; the sequence is MESQCRPNVDGVHNGVESHVKVVEKPRSVGSSS. Residues 34-54 traverse the membrane as a helical segment; the sequence is EFVLRILGLLLTLIAAVVAGV. The Extracellular portion of the chain corresponds to 55 to 85; it reads DKQTKIIPLTLIKTLPSLHVPVTAKWSDMSA. The helical transmembrane segment at 86–106 threads the bilayer; it reads FVYLVVSNAIACSYAAISLVL. Residues 107 to 118 lie on the Cytoplasmic side of the membrane; the sequence is VTMLGRRGKGGR. A helical transmembrane segment spans residues 119-139; that stretch reads VLAVIVLDLHMVGLLFSANGA. The Extracellular segment spans residues 140–172; that stretch reads ATAVGVLGQYGNSHVEWKKVCNVFDSFCHHLVA. A helical membrane pass occupies residues 173–193; sequence SLALSFLGSLSFLGLVLLAIL. Over 194 to 202 the chain is Cytoplasmic; it reads NLHKKSSTK.

This sequence belongs to the Casparian strip membrane proteins (CASP) family. Homodimer and heterodimers.

It is found in the cell membrane. The sequence is that of CASP-like protein 1E1 from Vitis vinifera (Grape).